We begin with the raw amino-acid sequence, 467 residues long: Uronate isomerase (467 aa).

The protein belongs to the metallo-dependent hydrolases superfamily. Uronate isomerase family.

It catalyses the reaction D-glucuronate = D-fructuronate. The enzyme catalyses aldehydo-D-galacturonate = keto-D-tagaturonate. It participates in carbohydrate metabolism; pentose and glucuronate interconversion. This Actinobacillus succinogenes (strain ATCC 55618 / DSM 22257 / CCUG 43843 / 130Z) protein is Uronate isomerase.